Consider the following 624-residue polypeptide: Chaperone protein HtpG (624 aa).

The interval 1–336 is a; substrate-binding; sequence MKGQETRGFQ…SNDLPLNVSR (336 aa). Residues 337–552 are b; that stretch reads EILQDSTVTR…ADEMSTQMAK (216 aa). The segment at 553 to 624 is c; it reads LFAAAGQSVP…IRRMNQLLVS (72 aa).

It belongs to the heat shock protein 90 family. As to quaternary structure, homodimer. In terms of processing, UMPylated on a histidine residue by YdiU under ATP-limited conditions.

The protein resides in the cytoplasm. With respect to regulation, UMPylation of the chaperone by YdiU negatively regulates its activity, facilitating Salmonella survival under ATP-limited conditions. Its function is as follows. Molecular chaperone. Has ATPase activity. The polypeptide is Chaperone protein HtpG (Salmonella typhimurium (strain LT2 / SGSC1412 / ATCC 700720)).